Consider the following 1133-residue polypeptide: Probable cation-transporting ATPase 9 (1133 aa).

The Cytoplasmic segment spans residues 1–6 (MRVSSI). A helical membrane pass occupies residues 7-28 (EAEMENPIDVDKTDVEGELKIK). The Extracellular portion of the chain corresponds to 29–34 (QVTLLR). The chain crosses the membrane as a helical span at residues 35 to 53 (ENIVKKIVFFLVAIFCSDR). The Cytoplasmic portion of the chain corresponds to 54 to 167 (PSVLKKVFYE…IEINVPSFLT (114 aa)). The chain crosses the membrane as a helical span at residues 168–190 (LMWREFKKPINFLLYFGIIVWGI). The Extracellular portion of the chain corresponds to 191 to 193 (EQM). A helical membrane pass occupies residues 194-212 (YVSTAITVVFTTTINSLIC). At 213–363 (IYIRGVMQKL…PFNKKFQQQA (151 aa)) the chain is on the cytoplasmic side. A helical membrane pass occupies residues 364-383 (VKLTILMATLLLIGFLSTLS). The Extracellular portion of the chain corresponds to 384 to 396 (RLLDIELPPLFIA). A helical membrane pass occupies residues 397 to 418 (FRFLDILIYSAPPGMPMLIAIT). At 419 to 887 (NFVGLKRLKN…NSVEIFKGYL (469 aa)) the chain is on the cytoplasmic side. Residue D451 is the 4-aspartylphosphate intermediate of the active site. Residues D827 and D831 each contribute to the Mg(2+) site. Residues 888 to 906 (QVALLRYLGFLTLAYFYSS) form a helical membrane-spanning segment. Topologically, residues 907–915 (YSSGQMDWQ) are extracellular. The chain crosses the membrane as a helical span at residues 916–931 (ALASGYFLVYLILGCN). Residues 932–948 (TPLKKLEKSVFDDNLFS) are Cytoplasmic-facing. A helical transmembrane segment spans residues 949 to 972 (IYNVTSVLFGFTLHILSIVGCVES). Residues 973-994 (LHASPIYKEVNSLDAENNFQFE) are Extracellular-facing. The helical transmembrane segment at 995 to 1018 (TQHNTVLNFNILINFFYVIISNHI) threads the bilayer. Residues 1019–1030 (GKPMKDRYYKNT) lie on the Cytoplasmic side of the membrane. A helical transmembrane segment spans residues 1031–1050 (IAIYYDLGLIYTCKCMILQV). The Extracellular portion of the chain corresponds to 1051–1101 (LLILEHTHHGLIFLILLLDQEFSSSLTVQVYFSLPMNLFLPEEFSLNFTQE). A helical membrane pass occupies residues 1102–1124 (VKKEKELLICNSSSTILEVDYNL). Residues 1125-1133 (RLNYFQQNF) lie on the Cytoplasmic side of the membrane.

It belongs to the cation transport ATPase (P-type) (TC 3.A.3) family. Type V subfamily.

The protein localises to the membrane. It carries out the reaction ATP + H2O = ADP + phosphate + H(+). The chain is Probable cation-transporting ATPase 9 (TPA9) from Tetrahymena thermophila.